A 956-amino-acid polypeptide reads, in one-letter code: ATPase 11, plasma membrane-type (956 aa).

Residues 1 to 65 lie on the Cytoplasmic side of the membrane; the sequence is MGDKEEVLEA…EKKESKFLKF (65 aa). A helical transmembrane segment spans residues 66-85; that stretch reads LGFMWNPLSWVMEAAAIMAI. Residues 86-97 lie on the Extracellular side of the membrane; it reads ALANGGGKPPDW. A helical transmembrane segment spans residues 98–118; that stretch reads QDFVGIITLLVINSTISFIEE. Topologically, residues 119-247 are cytoplasmic; that stretch reads NNAGNAAAAL…GHFQQVLTAI (129 aa). The helical transmembrane segment at 248-268 threads the bilayer; that stretch reads GNFCICSIAVGMIIEIVVMYP. Residues 269 to 277 lie on the Extracellular side of the membrane; it reads IQHRAYRPG. Residues 278–295 traverse the membrane as a helical segment; that stretch reads IDNLLVLLIGGIPIAMPT. Residues 296–647 are Cytoplasmic-facing; the sequence is VLSVTMAIGS…TSRAIFQRMK (352 aa). Catalysis depends on Asp333, which acts as the 4-aspartylphosphate intermediate. The Mg(2+) site is built by Asp592 and Asp596. Residues 648-669 form a helical membrane-spanning segment; that stretch reads NYTIYAVSITIRIVLGFMLLAL. Residues 670-674 are Extracellular-facing; sequence IWKFD. A helical transmembrane segment spans residues 675–697; the sequence is FPPFMVLIIAILNDGTIMTISKD. The Cytoplasmic portion of the chain corresponds to 698 to 713; it reads RVKPSPLPDSWKLSEI. The helical transmembrane segment at 714 to 734 threads the bilayer; it reads FATGVVFGSYMAMMTVIFFWA. Residues 735–759 lie on the Extracellular side of the membrane; that stretch reads AYKTDFFPRTFGVSTLEKTAHDDFR. A helical membrane pass occupies residues 760 to 780; it reads KLASAIYLQVSIISQALIFVT. The Cytoplasmic portion of the chain corresponds to 781–792; that stretch reads RSRSWSYVERPG. A helical transmembrane segment spans residues 793-813; the sequence is MLLVVAFILAQLVATLIAVYA. Residues 814 to 821 are Extracellular-facing; sequence NWSFAAIE. Residues 822–842 traverse the membrane as a helical segment; it reads GIGWGWAGVIWLYNIVFYIPL. The Cytoplasmic portion of the chain corresponds to 843-956; the sequence is DIIKFLIRYA…IETIQQAYTV (114 aa). Thr889 is modified (phosphothreonine). Ser938 carries the post-translational modification Phosphoserine. The interval 954-956 is interaction with 14-3-3 proteins; that stretch reads YTV. A Phosphothreonine modification is found at Thr955.

It belongs to the cation transport ATPase (P-type) (TC 3.A.3) family. Type IIIA subfamily. As to quaternary structure, binds to 14-3-3 proteins. The binding is induced by phosphorylation of Thr-955. Binding to 14-3-3 proteins activates the H(+)-ATPase. Expressed in guard cells, mesophyll cells, leaves and roots.

It localises to the membrane. It catalyses the reaction ATP + H2O + H(+)(in) = ADP + phosphate + 2 H(+)(out). Its function is as follows. The plasma membrane H(+) ATPase of plants and fungi generates a proton gradient that drives the active transport of nutrients by H(+)-symport. The resulting external acidification and/or internal alkinization may mediate growth responses. The polypeptide is ATPase 11, plasma membrane-type (AHA11) (Arabidopsis thaliana (Mouse-ear cress)).